The following is a 140-amino-acid chain: Sex-regulated protein janus-B (140 aa).

Arg-42 contributes to the substrate binding site. His-69 serves as the catalytic Proton acceptor. 110 to 112 is a binding site for substrate; the sequence is SRT.

Belongs to the janus family.

Functionally, janA and janB regulate somatic sex differentiation. The polypeptide is Sex-regulated protein janus-B (janB) (Drosophila erecta (Fruit fly)).